The primary structure comprises 511 residues: Maturase K (511 aa).

Belongs to the intron maturase 2 family. MatK subfamily.

The protein localises to the plastid. It is found in the chloroplast. Its function is as follows. Usually encoded in the trnK tRNA gene intron. Probably assists in splicing its own and other chloroplast group II introns. This Hordeum vulgare (Barley) protein is Maturase K.